Consider the following 129-residue polypeptide: MAKPAAKTKKKIKRVVTDGVAHVHASFNNTIVTITDRQGNALSWATSGGAGFRGSRKSTPFAAQVAAEKAGRAALDYGVKSLEVRIKGPGPGRESAVRSLNNVGYKITNIIDVTPIPHNGCRPPKKRRV.

It belongs to the universal ribosomal protein uS11 family. Part of the 30S ribosomal subunit. Interacts with proteins S7 and S18. Binds to IF-3.

Functionally, located on the platform of the 30S subunit, it bridges several disparate RNA helices of the 16S rRNA. Forms part of the Shine-Dalgarno cleft in the 70S ribosome. In Stenotrophomonas maltophilia (strain R551-3), this protein is Small ribosomal subunit protein uS11.